The chain runs to 657 residues: Probable potassium transport system protein Kup (657 aa).

The segment at 1-25 (MGSGPADEEHTVDTEPGVSPPRRTV) is disordered. Transmembrane regions (helical) follow at residues 35–55 (VVVG…IYTI), 77–97 (VVSL…VLLV), 127–147 (TAVL…DSMI), 165–185 (PGLE…LFSV), 196–216 (LFGP…VSGI), 234–254 (FFFG…LAVT), 275–295 (WLVL…ALLL), 315–335 (WPMV…VITG), 365–385 (IYVP…VFAF), 394–414 (AFGM…FYIV), 422–442 (LWLV…FLAA), and 447–467 (LVHG…VMTT).

Belongs to the HAK/KUP transporter (TC 2.A.72) family.

The protein resides in the cell membrane. It catalyses the reaction K(+)(in) + H(+)(in) = K(+)(out) + H(+)(out). Its function is as follows. Transport of potassium into the cell. Likely operates as a K(+):H(+) symporter. This is Probable potassium transport system protein Kup from Rhodococcus jostii (strain RHA1).